Consider the following 95-residue polypeptide: Small ribosomal subunit protein bS6 (95 aa).

The protein belongs to the bacterial ribosomal protein bS6 family.

Binds together with bS18 to 16S ribosomal RNA. The protein is Small ribosomal subunit protein bS6 of Desulforamulus reducens (strain ATCC BAA-1160 / DSM 100696 / MI-1) (Desulfotomaculum reducens).